The chain runs to 464 residues: Methionine aminopeptidase 2-2 (464 aa).

The disordered stretch occupies residues 1 to 106 (MGAKTYEGGD…PRVPLSQLFP (106 aa)). Over residues 37 to 53 (EDGDGEFGSDDDDDGGD) the composition is skewed to acidic residues. The segment covering 70 to 86 (PKKKKRSKKKKNNKKKS) has biased composition (basic residues). Histidine 216 is a substrate binding site. Positions 237, 248, and 317 each coordinate a divalent metal cation. Histidine 325 lines the substrate pocket. Residues glutamate 350 and glutamate 445 each contribute to the a divalent metal cation site.

The protein belongs to the peptidase M24A family. Methionine aminopeptidase eukaryotic type 2 subfamily. The cofactor is Co(2+). Zn(2+) serves as cofactor. Requires Mn(2+) as cofactor. It depends on Fe(2+) as a cofactor.

It is found in the cytoplasm. It catalyses the reaction Release of N-terminal amino acids, preferentially methionine, from peptides and arylamides.. In terms of biological role, cotranslationally removes the N-terminal methionine from nascent proteins. The N-terminal methionine is often cleaved when the second residue in the primary sequence is small and uncharged (Met-Ala-, Cys, Gly, Pro, Ser, Thr, or Val). The sequence is that of Methionine aminopeptidase 2-2 from Talaromyces stipitatus (strain ATCC 10500 / CBS 375.48 / QM 6759 / NRRL 1006) (Penicillium stipitatum).